The following is a 29-amino-acid chain: Trypsin inhibitor 1 (29 aa).

Intrachain disulfides connect C3-C20, C10-C22, and C16-C28.

Belongs to the protease inhibitor I7 (squash-type serine protease inhibitor) family.

It localises to the secreted. Functionally, inhibits trypsin. In Momordica repens, this protein is Trypsin inhibitor 1.